The primary structure comprises 311 residues: Phosphopantothenate--cysteine ligase (311 aa).

Ala-2 carries the post-translational modification N-acetylalanine.

It belongs to the PPC synthetase family. Homodimer.

It catalyses the reaction (R)-4'-phosphopantothenate + L-cysteine + ATP = N-[(R)-4-phosphopantothenoyl]-L-cysteine + AMP + diphosphate + H(+). It carries out the reaction (R)-4'-phosphopantothenate + L-cysteine + CTP = N-[(R)-4-phosphopantothenoyl]-L-cysteine + CMP + diphosphate + H(+). It functions in the pathway cofactor biosynthesis; coenzyme A biosynthesis; CoA from (R)-pantothenate: step 2/5. Its function is as follows. Catalyzes the second step in the biosynthesis of coenzyme A from vitamin B5, where cysteine is conjugated to 4'-phosphopantothenate to form 4-phosphopantothenoylcysteine. Has a preference for ATP over CTP as a cosubstrate. This chain is Phosphopantothenate--cysteine ligase (PPCS), found in Homo sapiens (Human).